A 646-amino-acid chain; its full sequence is Pentatricopeptide repeat-containing protein At5g48910 (646 aa).

The disordered stretch occupies residues 1 to 24 (MNPTQTLFSPGGNSPASSPASHPS). The segment covering 9–24 (SPGGNSPASSPASHPS) has biased composition (low complexity). PPR repeat units lie at residues 54–88 (DTLA…MPQR), 89–126 (NCFS…FVEP), 127–161 (NRFT…GFGG), 162–197 (DEFV…DMVV), 207–237 (EIVL…MRQR), 238–272 (SVVS…DIRP), 273–307 (NYVT…GIRI), 308–338 (DDVL…LPRE), 339–373 (NVIT…GVRP), 374–409 (SDVA…GLEP), and 410–440 (RIEH…MPIK). Residues 445–520 (IWKALLGACR…DPGCSLIDID (76 aa)) form a type E motif region. Residues 521–551 (GVLHEFVVEDDSHPKAKEINSMLVEISDKLR) are type E(+) motif. A type DYW motif region spans residues 552-646 (LAGYRPITTQ…DGSCSCMDYW (95 aa)).

It belongs to the PPR family. PCMP-H subfamily.

In Arabidopsis thaliana (Mouse-ear cress), this protein is Pentatricopeptide repeat-containing protein At5g48910 (PCMP-H38).